We begin with the raw amino-acid sequence, 498 residues long: ATP synthase subunit beta, chloroplastic (498 aa).

ATP is bound at residue 172-179; sequence GGAGVGKT.

This sequence belongs to the ATPase alpha/beta chains family. F-type ATPases have 2 components, CF(1) - the catalytic core - and CF(0) - the membrane proton channel. CF(1) has five subunits: alpha(3), beta(3), gamma(1), delta(1), epsilon(1). CF(0) has four main subunits: a(1), b(1), b'(1) and c(9-12).

Its subcellular location is the plastid. The protein localises to the chloroplast thylakoid membrane. It carries out the reaction ATP + H2O + 4 H(+)(in) = ADP + phosphate + 5 H(+)(out). Its function is as follows. Produces ATP from ADP in the presence of a proton gradient across the membrane. The catalytic sites are hosted primarily by the beta subunits. The chain is ATP synthase subunit beta, chloroplastic from Coffea arabica (Arabian coffee).